Here is a 224-residue protein sequence, read N- to C-terminus: MINQKKIAGEKACEWIKDGMVVGLGTGSTVYYTIEKLGEMVNNGLHITGVATSEETSKQAQNLGIPLKSLNDVAEIDITIDGADEIDTDFQGIKGGGGALLREKMVASASLKNIWVVSEEKLVRNLGKFPLPIEVIPFGWKQIERTLEKEHVQTILRRQSSGEIYVTNNGNYILDIVNQTFRDAEMWQEKLAQIPGIVEHGLFLHYVDIIVCAKANGEIELIKK.

Substrate-binding positions include 26–29, 81–84, and 94–97; these read TGST, DGAD, and KGGG. Residue E103 is the Proton acceptor of the active site. K121 contributes to the substrate binding site.

It belongs to the ribose 5-phosphate isomerase family. As to quaternary structure, homodimer.

It catalyses the reaction aldehydo-D-ribose 5-phosphate = D-ribulose 5-phosphate. It participates in carbohydrate degradation; pentose phosphate pathway; D-ribose 5-phosphate from D-ribulose 5-phosphate (non-oxidative stage): step 1/1. Catalyzes the reversible conversion of ribose-5-phosphate to ribulose 5-phosphate. The protein is Ribose-5-phosphate isomerase A of Listeria monocytogenes serotype 4b (strain CLIP80459).